We begin with the raw amino-acid sequence, 55 residues long: Trypsin inhibitor (55 aa).

The 55-residue stretch at 1–55 (AHMDCTEFNPLCRCNKMLGDLICAVIGDAKEEHRNMCALCCEHPGGFEYSNGPCE) folds into the Kazal-like domain. 4 disulfides stabilise this stretch: C5-C40, C12-C41, C14-C37, and C23-C54.

It is found in the secreted. Its function is as follows. Potent inhibitor of trypsin. In Halocynthia roretzi (Sea squirt), this protein is Trypsin inhibitor.